Reading from the N-terminus, the 397-residue chain is tRNA(Met) cytidine acetate ligase (397 aa).

Residues 7–20 (VTEYNPFHNGHIYH), Gly101, Asn152, and Arg177 contribute to the ATP site.

The protein belongs to the TmcAL family.

Its subcellular location is the cytoplasm. It catalyses the reaction cytidine(34) in elongator tRNA(Met) + acetate + ATP = N(4)-acetylcytidine(34) in elongator tRNA(Met) + AMP + diphosphate. Functionally, catalyzes the formation of N(4)-acetylcytidine (ac(4)C) at the wobble position of elongator tRNA(Met), using acetate and ATP as substrates. First activates an acetate ion to form acetyladenylate (Ac-AMP) and then transfers the acetyl group to tRNA to form ac(4)C34. This chain is tRNA(Met) cytidine acetate ligase, found in Leuconostoc citreum (strain KM20).